The chain runs to 91 residues: Small ribosomal subunit protein bS18 (91 aa).

Over residues 1–14 the composition is skewed to low complexity; it reads MTNQNQSQTQTTQT. The segment at 1 to 24 is disordered; sequence MTNQNQSQTQTTQTVEKVSSRQKK.

This sequence belongs to the bacterial ribosomal protein bS18 family. As to quaternary structure, part of the 30S ribosomal subunit. Forms a tight heterodimer with protein bS6.

Functionally, binds as a heterodimer with protein bS6 to the central domain of the 16S rRNA, where it helps stabilize the platform of the 30S subunit. This chain is Small ribosomal subunit protein bS18, found in Caldicellulosiruptor saccharolyticus (strain ATCC 43494 / DSM 8903 / Tp8T 6331).